The primary structure comprises 215 residues: Porin MspC (215 aa).

Positions 1-31 (MKAISRVLIAMISALAAAVAGLFVSAGTSHA) are cleaved as a signal peptide.

It belongs to the mycobacterial porin (TC 1.B.24) family. Octamers. Probably forms a goblet with the wide end on the exterior of the outer membrane and a central channel. It is not known if mixed oligomers of MspC with other Msp subunits form in vivo.

It localises to the cell outer membrane. The protein resides in the secreted. Its subcellular location is the cell wall. Functionally, a constitutively expressed secondary porin, forms a water-filled channel which favors the permeation of cations and less efficiently phosphate. There are about 2400 porins in wild-type, 800 in an mspA deletion and 150 in a double mspA-mspC deletion. The chain is Porin MspC (mspC) from Mycolicibacterium smegmatis (strain ATCC 700084 / mc(2)155) (Mycobacterium smegmatis).